A 451-amino-acid polypeptide reads, in one-letter code: Multidrug export protein MepA (451 aa).

Helical transmembrane passes span 26 to 46, 54 to 74, 97 to 117, 139 to 159, 170 to 190, 194 to 214, 245 to 265, 282 to 302, 318 to 338, 355 to 375, 397 to 417, and 418 to 438; these read MIGTLLSVIYGILNIYFIGFL, AISLTLPVFAILMGLGNLFGV, SFSIYGGIALGLIVILVTLPF, LKVMFLSAPFVILFFILEQFA, IGMLASVGLNIILDPILIFGF, VVGAALGTAISNVAAALFFII, IPAFLMSILMGFTGLVLNLFL, LVQFPELIIMGLCEGVVPLIA, AVIMSIGVIFVVCMIAVFTIG, ATFILKVTMASLLLNGIGFLF, AIIIPVLFIMNALFGLTGVIW, and SLLIAESLCALAAMLIVYLLR.

This sequence belongs to the multi antimicrobial extrusion (MATE) (TC 2.A.66.1) family. MepA subfamily.

It localises to the cell membrane. In terms of biological role, multidrug resistance efflux protein. Contributes to resistance to the glycylcycline antibiotic tigecycline. The polypeptide is Multidrug export protein MepA (mepA) (Staphylococcus aureus (strain N315)).